We begin with the raw amino-acid sequence, 1244 residues long: Mitotic chromosome and X-chromosome-associated protein mix-1 (1244 aa).

32-39 (GYNGSGKS) is an ATP binding site. A coiled-coil region spans residues 247-355 (VKKSAKEIED…AKRKEHEDSK (109 aa)). Residues 337–355 (LSKDREVLDAKRKEHEDSK) are compositionally biased toward basic and acidic residues. Positions 337–369 (LSKDREVLDAKRKEHEDSKAANSKDIQSQSDDE) are disordered. Residues 356 to 365 (AANSKDIQSQ) are compositionally biased toward polar residues. Residues 415-472 (ITAAKKRGERLHNQIKHLEGEKATLSARSKSDIGSADNYQKEVDEINKQLQLLGFNID) are a coiled coil. An SMC hinge domain is found at 526–654 (DVFGYVAHLI…DSLDVAREIA (129 aa)). Coiled coils occupy residues 701–946 (PQIE…RKEA) and 975–1037 (YTVS…IATL). Residues 919–932 (AKTKSKREEKEKEL) are compositionally biased toward basic and acidic residues. Residues 919-943 (AKTKSKREEKEKELTSLQQSEASNR) are disordered. Over residues 1216–1232 (DAAAKKGAQKNDKEPPK) the composition is skewed to basic and acidic residues. The tract at residues 1216–1244 (DAAAKKGAQKNDKEPPKKKPIVVDDDDFE) is disordered.

The protein belongs to the SMC family. SMC2 subfamily. As to quaternary structure, component of the condensin I complex, which contains the mix-1/SMC2 and smc-4/SMC4 heterodimer, and three non SMC subunits that probably regulate the complex: dpy-26, capg-1 and dpy-28. Within the complex, interacts with smc-4, dpy-26, dpy-28 and capg-1. Interaction with smc-4 is required for mitotic chromosome localization. Component of the condensin II complex, which contains the mix-1/SMC2 and smc-4/SMC4 heterodimer, and three non SMC subunits, capg-2, kle-2 and hcp-6 that probably regulate the complex. Within the complex, interacts with smc-4, capg-2, kle-2 and hcp-6. Also a component of the condensin-like dosage compensation complex, which contains the mix-1/SMC2 and dpy-27/SMC4 heterodimer, and three non SMC subunits that probably regulate the complex: dpy-26, capg-1 and dpy-28. Within the complex, interacts with dpy-27, dpy-26, capg-1 and dpy-28. Requires capg-1 for hermaphrodite X chromosome localization. Interacts with smcl-1. Expressed in embryos and in adult somatic and germline tissues (at protein level).

It is found in the nucleus. Its subcellular location is the chromosome. In terms of biological role, essential protein required for both chromosome condensation and segregation and X-chromosome dosage compensation depending on its binding partners. Central component of the condensin I complex, a complex required for conversion of interphase chromatin into mitotic-like condense chromosomes. The condensin complex introduces positive supercoils into relaxed DNA in the presence of type I topoisomerases. Converts nicked DNA into positive knotted forms in the presence of type II topoisomerases. Central component of the condensin II complex, a complex that seems to play a role in prophase chromosome condensation and organization. Both the condensin complex I and II play a role in meiotic and mitotic chromosome segregation. Plays a role in robust cytokinesis upon the presence of chromatin obstructions. Also a member of the condensin I-like dosage compensation complex that associates specifically with hermaphrodite X chromosomes to reduce their gene transcription during interphase. This Caenorhabditis elegans protein is Mitotic chromosome and X-chromosome-associated protein mix-1 (mix-1).